The sequence spans 370 residues: Histidinol-phosphate aminotransferase (370 aa).

Lysine 223 carries the N6-(pyridoxal phosphate)lysine modification.

It belongs to the class-II pyridoxal-phosphate-dependent aminotransferase family. Histidinol-phosphate aminotransferase subfamily. Homodimer. Requires pyridoxal 5'-phosphate as cofactor.

The catalysed reaction is L-histidinol phosphate + 2-oxoglutarate = 3-(imidazol-4-yl)-2-oxopropyl phosphate + L-glutamate. It participates in amino-acid biosynthesis; L-histidine biosynthesis; L-histidine from 5-phospho-alpha-D-ribose 1-diphosphate: step 7/9. The sequence is that of Histidinol-phosphate aminotransferase from Methylobacterium sp. (strain 4-46).